We begin with the raw amino-acid sequence, 114 residues long: MGPGLLCWALLCLLGAGSVETGVTQSPTHLIKTRGQQVTLRCSSQSGHNTVSWYQQALGQGPQFIFQYYREEENGRGNFPPRFSGLQFPNYSSELNVNALELDDSALYLCASSL.

The first 21 residues, 1–21 (MGPGLLCWALLCLLGAGSVET), serve as a signal peptide directing secretion. The Ig-like domain occupies 22–114 (GVTQSPTHLI…SALYLCASSL (93 aa)). Cysteines 42 and 110 form a disulfide. N-linked (GlcNAc...) asparagine glycosylation is present at Asn-90.

In terms of assembly, alpha-beta TR is a heterodimer composed of an alpha and beta chain; disulfide-linked. The alpha-beta TR is associated with the transmembrane signaling CD3 coreceptor proteins to form the TR-CD3 (TcR or TCR). The assembly of alpha-beta TR heterodimers with CD3 occurs in the endoplasmic reticulum where a single alpha-beta TR heterodimer associates with one CD3D-CD3E heterodimer, one CD3G-CD3E heterodimer and one CD247 homodimer forming a stable octameric structure. CD3D-CD3E and CD3G-CD3E heterodimers preferentially associate with TR alpha and TR beta chains, respectively. The association of the CD247 homodimer is the last step of TcR assembly in the endoplasmic reticulum and is required for transport to the cell surface.

It is found in the cell membrane. Functionally, v region of the variable domain of T cell receptor (TR) beta chain that participates in the antigen recognition. Alpha-beta T cell receptors are antigen specific receptors which are essential to the immune response and are present on the cell surface of T lymphocytes. Recognize peptide-major histocompatibility (MH) (pMH) complexes that are displayed by antigen presenting cells (APC), a prerequisite for efficient T cell adaptive immunity against pathogens. Binding of alpha-beta TR to pMH complex initiates TR-CD3 clustering on the cell surface and intracellular activation of LCK that phosphorylates the ITAM motifs of CD3G, CD3D, CD3E and CD247 enabling the recruitment of ZAP70. In turn ZAP70 phosphorylates LAT, which recruits numerous signaling molecules to form the LAT signalosome. The LAT signalosome propagates signal branching to three major signaling pathways, the calcium, the mitogen-activated protein kinase (MAPK) kinase and the nuclear factor NF-kappa-B (NF-kB) pathways, leading to the mobilization of transcription factors that are critical for gene expression and essential for T cell growth and differentiation. The T cell repertoire is generated in the thymus, by V-(D)-J rearrangement. This repertoire is then shaped by intrathymic selection events to generate a peripheral T cell pool of self-MH restricted, non-autoaggressive T cells. Post-thymic interaction of alpha-beta TR with the pMH complexes shapes TR structural and functional avidity. This Homo sapiens (Human) protein is T cell receptor beta variable 5-4.